The primary structure comprises 152 residues: Succinate dehydrogenase [ubiquinone] cytochrome b small subunit, mitochondrial (152 aa).

Residues 1–21 (MATLLRVSSLCRANRASAFKS) constitute a mitochondrion transit peptide. Over 22–56 (LLIRPVPCLTQDHHMVQTSQIHTSPNHHAGSKAAS) the chain is Mitochondrial matrix. A helical transmembrane segment spans residues 57–78 (MHWTSERALSVALLGLLPAAYL). The Mitochondrial intermembrane segment spans residues 79-83 (YPGAA). Residues 84-104 (MDYSLAAALTLHGHWGLGQVV) form a helical membrane-spanning segment. A heme b-binding site is contributed by His-95. The Mitochondrial matrix portion of the chain corresponds to 105–113 (TDYVHGDAK). Tyr-107 lines the a ubiquinone pocket. A helical transmembrane segment spans residues 114–135 (IKMANTSLFALSALTFAGLCYF). The Mitochondrial intermembrane segment spans residues 136–152 (NYHDVGICKAVSMLWSL).

This sequence belongs to the CybS family. As to quaternary structure, component of complex II composed of four subunits: the flavoprotein (FP) SDHA, iron-sulfur protein (IP) SDHB, and a cytochrome b560 composed of SDHC and SDHD.

It localises to the mitochondrion inner membrane. It participates in carbohydrate metabolism; tricarboxylic acid cycle. Functionally, membrane-anchoring subunit of succinate dehydrogenase (SDH) that is involved in complex II of the mitochondrial electron transport chain and is responsible for transferring electrons from succinate to ubiquinone (coenzyme Q). SDH also oxidizes malate to the non-canonical enol form of oxaloacetate, enol-oxaloacetate. Enol-oxaloacetate, which is a potent inhibitor of the succinate dehydrogenase activity, is further isomerized into keto-oxaloacetate. The polypeptide is Succinate dehydrogenase [ubiquinone] cytochrome b small subunit, mitochondrial (sdhd) (Xenopus tropicalis (Western clawed frog)).